The following is a 53-amino-acid chain: Small polypeptide DEVIL 7 (53 aa).

The span at 1–16 (MREKYTKEEAVKNWEK) shows a compositional bias: basic and acidic residues. A disordered region spans residues 1 to 28 (MREKYTKEEAVKNWEKKKNKPSSPKGVG). A required for DVL/RTFL small polypeptide activity region spans residues 22 to 53 (SSPKGVGEFLKKKKGRFYIIGKCITMLLCSHK). The helical transmembrane segment at 30–46 (FLKKKKGRFYIIGKCIT) threads the bilayer.

It belongs to the DVL/RTFL small polypeptides family.

The protein localises to the cell membrane. In terms of biological role, small polypeptide acting as a regulatory molecule which coordinates cellular responses required for differentiation, growth and development, probably by restricting polar cell proliferation in lateral organs and coordinating socket cell recruitment and differentiation at trichome sites. This chain is Small polypeptide DEVIL 7, found in Arabidopsis thaliana (Mouse-ear cress).